Here is a 374-residue protein sequence, read N- to C-terminus: GPN-loop GTPase 1 (374 aa).

Ala-2 is subject to N-acetylalanine. GTP is bound at residue 29–34; sequence GSGKTT. Positions 86 to 88 match the Gly-Pro-Asn (GPN)-loop; involved in dimer interface motif; that stretch reads GPN. 189-192 provides a ligand contact to GTP; the sequence is NKTD. Residues Ser-301, Ser-312, and Ser-314 each carry the phosphoserine modification. Residues 326-354 form a disordered region; that stretch reads RGTLDEEDEEADSDTDDIDHRVTEESHEE. At Thr-328 the chain carries Phosphothreonine. The segment covering 330–342 has biased composition (acidic residues); it reads DEEDEEADSDTDD. Ser-338 carries the phosphoserine modification. A Phosphothreonine modification is found at Thr-340. Residues 343–354 show a composition bias toward basic and acidic residues; it reads IDHRVTEESHEE.

The protein belongs to the GPN-loop GTPase family. In terms of assembly, heterodimer with GPN3. Binds to RNA polymerase II (RNAPII). Interacts directly with RNAPII subunits RPB4 and RPB7 and the CTD of RPB1. Interacts with XPA. As to expression, expressed ubiquitously.

It localises to the cytoplasm. The protein resides in the nucleus. Small GTPase required for proper nuclear import of RNA polymerase II (RNAPII). May act at an RNAP assembly step prior to nuclear import. Forms an interface between the RNA polymerase II enzyme and chaperone/scaffolding proteins, suggesting that it is required to connect RNA polymerase II to regulators of protein complex formation. May be involved in nuclear localization of XPA. In Homo sapiens (Human), this protein is GPN-loop GTPase 1.